We begin with the raw amino-acid sequence, 842 residues long: Serine/threonine-protein phosphatase 4 regulatory subunit 3 (842 aa).

In terms of assembly, regulatory subunit 3 (R3) of the histone H2A phosphatase complex (HTP-C) consisting of PPH3, PSY2 and PSY4.

The protein localises to the nucleus. Its function is as follows. Core regulatory subunit of the histone H2A phosphatase complex, which dephosphorylates H2AS128ph (gamma-H2A) that has been displaced from sites of DNA lesions in the double-stranded DNA break repair process. Dephosphorylation is necessary for efficient recovery from the DNA damage checkpoint. In Candida glabrata (strain ATCC 2001 / BCRC 20586 / JCM 3761 / NBRC 0622 / NRRL Y-65 / CBS 138) (Yeast), this protein is Serine/threonine-protein phosphatase 4 regulatory subunit 3 (PSY2).